Here is a 159-residue protein sequence, read N- to C-terminus: Transmembrane protein 88 (159 aa).

Helical transmembrane passes span 43–63 (LLLL…MLGF) and 88–108 (FTAL…LALA).

This sequence belongs to the TMEM88 family. As to quaternary structure, interacts (via C-terminus) with DVL1.

It localises to the cell membrane. Inhibits the Wnt/beta-catenin signaling pathway. Crucial for heart development and acts downstream of GATA factors in the pre-cardiac mesoderm to specify lineage commitment of cardiomyocyte development. This Mus musculus (Mouse) protein is Transmembrane protein 88 (Tmem88).